Here is a 55-residue protein sequence, read N- to C-terminus: MAAKTDIRPKITLACQECKHRNYITRKNRRNDPDRLELKKYCPHCNKHQVHRETR.

It belongs to the bacterial ribosomal protein bL33 family.

The polypeptide is Large ribosomal subunit protein bL33 (Acidothermus cellulolyticus (strain ATCC 43068 / DSM 8971 / 11B)).